Consider the following 338-residue polypeptide: MVDFKSIIAKVATGATLTRDEATDAFDAMMSGDATPSQMGALLMGLRVRGETVDEITGAVTTMRAKMLPVTAPADAVDIVGTGGDGSGSVNVSTCASFVVAGCGVTVAKHGNRALSSKSGAADVLAALGVKIDITPEQVGRCVNEAGIGFMFAPTHHPAMKNVGPTRVELATRTIFNLLGPLSNPAGVKRQMIGVFSRQWVQPLAQVLKNLGSEAVWVVHGSDGLDEITLSGTTAVAELKNGEITSFEISPEDAGLPRAPADALKGGDAQANAVALRAVLEGMPGPYRDVALLNAAATLVVAGKARDLKEGVALGTQSIDSGAAEARLKKLIAVSAAA.

5-phospho-alpha-D-ribose 1-diphosphate-binding positions include Gly81, 84 to 85, Ser89, 91 to 94, 109 to 117, and Ala121; these read GD, NVST, and KHGNRALSS. Gly81 lines the anthranilate pocket. Ser93 lines the Mg(2+) pocket. Asn112 contributes to the anthranilate binding site. Arg167 is an anthranilate binding site. The Mg(2+) site is built by Asp226 and Glu227.

The protein belongs to the anthranilate phosphoribosyltransferase family. As to quaternary structure, homodimer. Requires Mg(2+) as cofactor.

The catalysed reaction is N-(5-phospho-beta-D-ribosyl)anthranilate + diphosphate = 5-phospho-alpha-D-ribose 1-diphosphate + anthranilate. It participates in amino-acid biosynthesis; L-tryptophan biosynthesis; L-tryptophan from chorismate: step 2/5. In terms of biological role, catalyzes the transfer of the phosphoribosyl group of 5-phosphorylribose-1-pyrophosphate (PRPP) to anthranilate to yield N-(5'-phosphoribosyl)-anthranilate (PRA). This chain is Anthranilate phosphoribosyltransferase, found in Rhodopseudomonas palustris (strain ATCC BAA-98 / CGA009).